Here is a 2727-residue protein sequence, read N- to C-terminus: E3 ubiquitin-protein ligase Ufd4 (2727 aa).

Disordered stretches follow at residues 247–271 and 365–389; these read THSS…TNSD and RGSN…TDRT. Residues 365 to 374 show a composition bias toward polar residues; it reads RGSNNPNQGQ. ANK repeat units lie at residues 422 to 451, 453 to 482, and 486 to 518; these read VGQT…DVNK, QRSS…YPDL, and DGKT…WMSP. The interval 682 to 702 is disordered; that stretch reads AQRSSTSVVVAPRPTSDDPME. The MIB/HERC2 domain maps to 1322-1392; sequence QIRAQLKHMT…KYDLKLADCE (71 aa). Composition is skewed to polar residues over residues 1401-1430 and 1437-1448; these read QSMG…STPS and KNQNPEGASNQT. Disordered stretches follow at residues 1401–1448, 1483–1512, 1570–1592, 1845–1871, 1905–1930, and 2092–2115; these read QSMG…SNQT, NTSS…GPSP, ESVT…REND, YPSL…QQSA, ALLG…DEYE, and STCL…ASTL. The segment covering 1575-1592 has biased composition (low complexity); sequence SQSSSHPDVQSSSPREND. Residues 1909–1930 show a composition bias toward acidic residues; it reads DLDDEDDMDEDNDEEENEDEYE. Residues 2104-2115 show a composition bias toward polar residues; the sequence is PDVSSKSGASTL. The HECT domain maps to 2289 to 2727; it reads RKSVLEVEFL…ATKEKGFHLN (439 aa). C2696 (glycyl thioester intermediate) is an active-site residue.

Belongs to the UPL family. K-HECT subfamily.

The catalysed reaction is S-ubiquitinyl-[E2 ubiquitin-conjugating enzyme]-L-cysteine + [acceptor protein]-L-lysine = [E2 ubiquitin-conjugating enzyme]-L-cysteine + N(6)-ubiquitinyl-[acceptor protein]-L-lysine.. It participates in protein modification; protein ubiquitination. E3 ubiquitin-protein ligase which accepts ubiquitin from an E2 ubiquitin-conjugating enzyme in the form of a thioester and then directly transfers the ubiquitin to targeted substrates. Involved in the negative regulation of the Ras/MAPK signaling pathway in the wing by acting with the E2 enzyme Unc6 and the putative E3 ligases poe and Kcmf1 to mediate the ubiquitination and proteasomal degradation of rl/MAPK. This Drosophila melanogaster (Fruit fly) protein is E3 ubiquitin-protein ligase Ufd4.